A 158-amino-acid polypeptide reads, in one-letter code: UPF0260 protein RHECIAT_CH0001358 (158 aa).

This sequence belongs to the UPF0260 family.

The sequence is that of UPF0260 protein RHECIAT_CH0001358 from Rhizobium etli (strain CIAT 652).